Here is a 449-residue protein sequence, read N- to C-terminus: Serum response factor homolog (449 aa).

Residues leucine 23–glycine 166 form a disordered region. Positions glutamine 69–serine 80 are enriched in polar residues. Positions glutamine 81 to glutamine 107 are enriched in low complexity. Serine 156 is subject to Phosphoserine. One can recognise an MADS-box domain in the interval arginine 167 to lysine 225. 2 disordered regions span residues tyrosine 270–serine 360 and leucine 418–aspartate 449. Low complexity-rich tracts occupy residues serine 317–serine 331 and threonine 345–alanine 354.

After germ band retraction, high levels of zygotic expression are observed in a distinct subset of peripheral tracheal cells distributed throughout the embryo and low levels in somatic muscle. Expressed in the future intervein tissue of the wing imaginal disk from the third instar larvae until eclosion of the adult fly (at protein level).

Its subcellular location is the nucleus. Required for the formation of intervein tissue of the wing. Acts in a dosage-dependent manner to suppress wing vein formation and promote development of intervein cells. Might play a role in the proper formation and maintenance of the trachea. This is Serum response factor homolog (bs) from Drosophila melanogaster (Fruit fly).